Consider the following 263-residue polypeptide: Lens fiber major intrinsic protein (263 aa).

Over 1-9 the chain is Cytoplasmic; sequence MWELRSASF. Residues 10-29 form a helical membrane-spanning segment; it reads WRAIFAEFFATLFYVFFGLG. Residues 30 to 41 lie on the Extracellular side of the membrane; the sequence is ASLRWAPGPLHV. Residues 42 to 59 traverse the membrane as a helical segment; the sequence is LQVALAFGLALATLVQTV. Residues 60–61 are Cytoplasmic-facing; sequence GH. The segment at residues 62 to 77 is an intramembrane region (discontinuously helical); it reads ISGAHVNPAVTFAFLV. The NPA 1 signature appears at 68 to 70; the sequence is NPA. Over 78-82 the chain is Cytoplasmic; it reads GSQMS. A helical transmembrane segment spans residues 83 to 106; the sequence is LLRAFCYIAAQLLGAVAGAAVLYS. Residues 107–127 lie on the Extracellular side of the membrane; sequence VTPPAVRGNLALNTLHAGVSV. A helical transmembrane segment spans residues 128–148; it reads GQATTVEIFLTLQFVLCIFAT. Over 149–156 the chain is Cytoplasmic; the sequence is YDERRNGR. A helical membrane pass occupies residues 157-175; it reads MGSVALAVGFSLTLGHLFG. Residues 176-178 lie on the Extracellular side of the membrane; sequence MYY. The discontinuously helical intramembrane region spans 179–193; the sequence is TGAGMNPARSFAPAI. The NPA 2 motif lies at 184 to 186; that stretch reads NPA. Residues 194–200 are Extracellular-facing; sequence LTRNFSN. Residues 201–222 traverse the membrane as a helical segment; sequence HWVYWVGPIIGGGLGSLLYDFL. Residues 223–263 lie on the Cytoplasmic side of the membrane; the sequence is LFPRLKSVSERLSILKGARPSDSNGQPEGTGEPVELKTQAL. The interaction with CALM stretch occupies residues 227-237; sequence LKSVSERLSIL. Phosphoserine occurs at positions 235, 243, and 245. The interval 240-263 is disordered; the sequence is ARPSDSNGQPEGTGEPVELKTQAL. At Asn246 the chain carries Deamidated asparagine.

This sequence belongs to the MIP/aquaporin (TC 1.A.8) family. As to quaternary structure, homotetramer; each monomer provides an independent water pore. Two homotetramers on opposing membranes can dimerize, forming a cell-cell junction. Interacts with CALM; the calcium-calmodulin/CALM complex interacts with the cytoplasmic domains of two aquaporins, leading to channel closure. Interacts with BFSP1 (via C-terminus); prevents calcium-dependent inhibition of the water channel activity. Post-translationally, subject to partial proteolytic cleavage in the eye lens core. Partial proteolysis promotes interactions between tetramers from adjoining membranes. Fatty acylated at Met-1 and Lys-238. The acyl modifications, in decreasing order of ion abundance, are: oleoyl (C18:1) &gt; palmitoyl (C16:0) &gt; stearoyl (C18:0) &gt; eicosenoyl (C20:1) &gt; dihomo-gamma-linolenoyl (C20:3) &gt; palmitoleoyl (C16:1) &gt; eicosadienoyl (C20:2).

It is found in the cell membrane. The protein resides in the cell junction. The enzyme catalyses H2O(in) = H2O(out). Its activity is regulated as follows. The water channel activity is inhibited by calcium through calmodulin/CALM. Aquaporins form homotetrameric transmembrane channels, with each monomer independently mediating water transport across the plasma membrane along its osmotic gradient. Specifically expressed in lens fiber cells, this aquaporin is crucial for maintaining lens water homeostasis and transparency. Beyond water permeability, it also acts as a cell-to-cell adhesion molecule, forming thin junctions between lens fiber cells that are essential for maintaining the ordered structure and transparency of the lens. This Mus musculus (Mouse) protein is Lens fiber major intrinsic protein.